The following is a 390-amino-acid chain: Type II methyltransferase M.SacI (390 aa).

Residues 5–371 enclose the SAM-dependent MTase C5-type domain; that stretch reads LPVISLFSGA…RALMEQLGYL (367 aa). Cysteine 96 is an active-site residue.

The protein belongs to the class I-like SAM-binding methyltransferase superfamily. C5-methyltransferase family.

The catalysed reaction is a 2'-deoxycytidine in DNA + S-adenosyl-L-methionine = a 5-methyl-2'-deoxycytidine in DNA + S-adenosyl-L-homocysteine + H(+). A beta methylase recognizes the double-stranded sequence 5'-GAGCTC-3', methylates C-4 on both strands, and protects the DNA from cleavage by the SacI endonuclease. This chain is Type II methyltransferase M.SacI, found in Streptomyces achromogenes.